We begin with the raw amino-acid sequence, 243 residues long: Uridylate kinase (243 aa).

Position 18 to 21 (18 to 21) interacts with ATP; that stretch reads KLGG. Gly59 contributes to the UMP binding site. ATP contacts are provided by Gly60 and Arg64. UMP contacts are provided by residues Asp79 and 140-147; that span reads MGMPYFST. 2 residues coordinate ATP: Tyr173 and Asp176.

Belongs to the UMP kinase family. In terms of assembly, homohexamer.

Its subcellular location is the cytoplasm. It carries out the reaction UMP + ATP = UDP + ADP. Its pathway is pyrimidine metabolism; CTP biosynthesis via de novo pathway; UDP from UMP (UMPK route): step 1/1. With respect to regulation, inhibited by UTP. In terms of biological role, catalyzes the reversible phosphorylation of UMP to UDP. The chain is Uridylate kinase from Corynebacterium glutamicum (strain R).